The chain runs to 504 residues: Probable cytochrome P450 6a21 (504 aa).

Residue Cys449 coordinates heme.

This sequence belongs to the cytochrome P450 family. It depends on heme as a cofactor.

It is found in the endoplasmic reticulum membrane. The protein resides in the microsome membrane. In terms of biological role, may be involved in the metabolism of insect hormones and in the breakdown of synthetic insecticides. The polypeptide is Probable cytochrome P450 6a21 (Cyp6a21) (Drosophila melanogaster (Fruit fly)).